We begin with the raw amino-acid sequence, 688 residues long: Potassium-transporting ATPase ATP-binding subunit (688 aa).

4 helical membrane-spanning segments follow: residues 37 to 57 (FLVY…LVGI), 65 to 85 (ILGI…AEAI), 219 to 239 (IALQ…TVSL), and 262 to 282 (VALL…SIGI). The active-site 4-aspartylphosphate intermediate is D313. ATP-binding positions include D350, E354, 383-390 (FTAKTRMS), and K401. Mg(2+) is bound by residues D524 and D528. Transmembrane regions (helical) follow at residues 594-614 (FAII…LNIM), 622-642 (AIFS…PLAL), and 668-688 (IIVP…IGIV).

Belongs to the cation transport ATPase (P-type) (TC 3.A.3) family. Type IA subfamily. In terms of assembly, the system is composed of three essential subunits: KdpA, KdpB and KdpC.

It is found in the cell membrane. The catalysed reaction is K(+)(out) + ATP + H2O = K(+)(in) + ADP + phosphate + H(+). Its function is as follows. Part of the high-affinity ATP-driven potassium transport (or Kdp) system, which catalyzes the hydrolysis of ATP coupled with the electrogenic transport of potassium into the cytoplasm. This subunit is responsible for energy coupling to the transport system and for the release of the potassium ions to the cytoplasm. The protein is Potassium-transporting ATPase ATP-binding subunit of Clostridium botulinum (strain Eklund 17B / Type B).